The primary structure comprises 389 residues: MARDRREGLEIKVVNPPAAATNNVAVETSPATATRRRRQQQRASFAEFRPFKLWFPWLVPAIVVANIALFAISMFINNCPKNSAYCLARFLGRFAFQPMKENPLLGPSSLTLEKMGALDVSMVVHKHEVWRLFTCIWLHAGVFHVLANMLSLIFIGIRLEQEFGFVRIGLLYMISGFGGSLLSSLFNRAGISVGASGALFGLLGAMLSELLTNWTIYANKFAALLTLIFIIAINLAVGILPHVDNFAHLGGFTSGFLLGFVFLIRPQYGYFNQRNNPRGYAAPSAKSKHKPYQYVLWITSLVLLIAGYTAGLVVLLRGTDLNKHCSWCHYLSCIPTSLWSCKSQNVYCESSQIGQQMNLTCITNGKTEMYKLSNDIPSRIQQLCSQLCR.

A run of 7 helical transmembrane segments spans residues 56–76, 136–156, 163–183, 191–211, 221–241, 244–264, and 295–315; these read PWLVPAIVVANIALFAISMFI, IWLHAGVFHVLANMLSLIFIG, FGFVRIGLLYMISGFGGSLLS, ISVGASGALFGLLGAMLSELL, FAALLTLIFIIAINLAVGILP, DNFAHLGGFTSGFLLGFVFLI, and VLWITSLVLLIAGYTAGLVVL. The Nucleophile role is filled by serine 196. Histidine 248 (charge relay system) is an active-site residue.

This sequence belongs to the peptidase S54 family. Expressed in roots, seedlings, leaves, stems and flowers.

It is found in the golgi apparatus membrane. The catalysed reaction is Cleaves type-1 transmembrane domains using a catalytic dyad composed of serine and histidine that are contributed by different transmembrane domains.. In terms of biological role, probable rhomboid-type serine protease that catalyzes intramembrane proteolysis. Unable to cleave the Drosophila protein Spitz. The polypeptide is RHOMBOID-like protein 1 (Arabidopsis thaliana (Mouse-ear cress)).